A 318-amino-acid polypeptide reads, in one-letter code: NADH-ubiquinone oxidoreductase chain 1 (318 aa).

The next 8 helical transmembrane spans lie at 2–22 (FMINVLSLIIPILLAVAFLTL), 69–89 (LMFIMAPILALTLALTMWIPL), 100–120 (LGVLFMLAMSSLAVYSILWSG), 146–166 (LAIILLSVLLMNGSFTLAMLI), 171–191 (YMWLIIPAWPLAMMWFISTLA), 223–243 (FFLAEYANIIMMNILTTILFF), 253–273 (ELYTINFTVKTLLLTTTFLWI), and 294–314 (LPLTLALCMWHVSLPIITASI).

This sequence belongs to the complex I subunit 1 family. Core subunit of respiratory chain NADH dehydrogenase (Complex I) which is composed of 45 different subunits.

It localises to the mitochondrion inner membrane. It catalyses the reaction a ubiquinone + NADH + 5 H(+)(in) = a ubiquinol + NAD(+) + 4 H(+)(out). Functionally, core subunit of the mitochondrial membrane respiratory chain NADH dehydrogenase (Complex I) which catalyzes electron transfer from NADH through the respiratory chain, using ubiquinone as an electron acceptor. Essential for the catalytic activity and assembly of complex I. This is NADH-ubiquinone oxidoreductase chain 1 (MT-ND1) from Felis catus (Cat).